A 602-amino-acid polypeptide reads, in one-letter code: Multiple epidermal growth factor-like domains protein 9 (602 aa).

Residues 1-30 (MNGGAERAMRSLPSLGGLALLCCAAAAAAA) form the signal peptide. The Extracellular portion of the chain corresponds to 31–514 (AVASAASAGN…LADVSWTQFN (484 aa)). Positions 38 to 199 (AGNVTGGGGA…PATEAPSSPP (162 aa)) are disordered. Residue Asn-40 is glycosylated (N-linked (GlcNAc...) asparagine). Low complexity-rich tracts occupy residues 68 to 85 (PRATAPTAQAPRTGPPRA) and 139 to 166 (APTRPAPTTLSTTTGPAPTTPVATTVPA). The span at 167–176 (PTTPRTPTPD) shows a compositional bias: pro residues. Asn-182 carries an N-linked (GlcNAc...) asparagine glycan. Over residues 187–199 (PTPPATEAPSSPP) the composition is skewed to pro residues. 20 disulfides stabilise this stretch: Cys-204–Cys-217, Cys-206–Cys-224, Cys-226–Cys-235, Cys-238–Cys-251, Cys-254–Cys-266, Cys-256–Cys-272, Cys-274–Cys-283, Cys-286–Cys-298, Cys-301–Cys-310, Cys-303–Cys-317, Cys-320–Cys-329, Cys-332–Cys-346, Cys-349–Cys-360, Cys-351–Cys-371, Cys-374–Cys-383, Cys-386–Cys-397, Cys-400–Cys-415, Cys-402–Cys-422, Cys-425–Cys-434, and Cys-437–Cys-449. Laminin EGF-like domains are found at residues 204–253 (CNCS…LCQP), 254–300 (CDCS…GCLP), 301–348 (CQCN…ECLR), 349–399 (CPCS…ICRK), and 400–451 (CQCH…NCIK). Residues Asn-205 and Asn-218 are each glycosylated (N-linked (GlcNAc...) asparagine). An N-linked (GlcNAc...) asparagine glycan is attached at Asn-245. Residue Asn-267 is glycosylated (N-linked (GlcNAc...) asparagine). A glycan (N-linked (GlcNAc...) asparagine) is linked at Asn-305. A glycan (N-linked (GlcNAc...) asparagine) is linked at Asn-428. 3 N-linked (GlcNAc...) asparagine glycosylation sites follow: Asn-468, Asn-481, and Asn-500. Residues 515 to 535 (IIILTVIIIVVVLLMGFVGAV) form a helical membrane-spanning segment. Over 536–602 (YMYREYQNRK…LTTPIHNYKA (67 aa)) the chain is Cytoplasmic.

It is found in the membrane. In Homo sapiens (Human), this protein is Multiple epidermal growth factor-like domains protein 9 (MEGF9).